The following is a 244-amino-acid chain: Prolactin-7D1 (244 aa).

Residues 1–30 (MLPSLIQPCSSGTLLMLLMSNLFLWEKVSS) form the signal peptide. 2 disulfide bridges follow: Cys-99–Cys-215 and Cys-232–Cys-240.

It belongs to the somatotropin/prolactin family.

The protein localises to the secreted. The protein is Prolactin-7D1 (Prl7d1) of Mus musculus (Mouse).